Reading from the N-terminus, the 308-residue chain is Acetyl-coenzyme A carboxylase carboxyl transferase subunit beta (308 aa).

Residues 25–294 enclose the CoA carboxyltransferase N-terminal domain; sequence VWTKCTSCEQ…PLVVSVNDAP (270 aa). Positions 29, 32, 48, and 51 each coordinate Zn(2+). The segment at 29–51 adopts a C4-type zinc-finger fold; that stretch reads CTSCEQVLYYAELERNLEVCPKC.

The protein belongs to the AccD/PCCB family. In terms of assembly, acetyl-CoA carboxylase is a heterohexamer composed of biotin carboxyl carrier protein (AccB), biotin carboxylase (AccC) and two subunits each of ACCase subunit alpha (AccA) and ACCase subunit beta (AccD). It depends on Zn(2+) as a cofactor.

Its subcellular location is the cytoplasm. The catalysed reaction is N(6)-carboxybiotinyl-L-lysyl-[protein] + acetyl-CoA = N(6)-biotinyl-L-lysyl-[protein] + malonyl-CoA. It functions in the pathway lipid metabolism; malonyl-CoA biosynthesis; malonyl-CoA from acetyl-CoA: step 1/1. Component of the acetyl coenzyme A carboxylase (ACC) complex. Biotin carboxylase (BC) catalyzes the carboxylation of biotin on its carrier protein (BCCP) and then the CO(2) group is transferred by the transcarboxylase to acetyl-CoA to form malonyl-CoA. The protein is Acetyl-coenzyme A carboxylase carboxyl transferase subunit beta of Vibrio cholerae serotype O1 (strain ATCC 39315 / El Tor Inaba N16961).